Here is a 204-residue protein sequence, read N- to C-terminus: Photosystem I reaction center subunit II-2, chloroplastic (204 aa).

Residues 1–44 (MATQAAGIFSPAITTTTSAVKKLHLFSSSHRPKSLSFTKTAIRA) constitute a chloroplast transit peptide. Thr47 carries the post-translational modification Phosphothreonine. A disordered region spans residues 47–71 (TESSSAAPAVKEAPVGFTPPQLDPN). Residues 137-145 (RLRSKYKIT) are ferredoxin and ferredoxin-oxidoreductase binding.

It belongs to the PsaD family. In terms of assembly, interacts with CURT1C.

It is found in the plastid. The protein resides in the chloroplast thylakoid membrane. In terms of biological role, PSAD can form complexes with ferredoxin and ferredoxin-oxidoreductase in photosystem I (PS I) reaction center. PSAD may encode the ferredoxin-docking protein. The sequence is that of Photosystem I reaction center subunit II-2, chloroplastic (PSAD2) from Arabidopsis thaliana (Mouse-ear cress).